We begin with the raw amino-acid sequence, 217 residues long: Killer cell lectin-like receptor subfamily B member 1F (217 aa).

Residues 1–45 lie on the Cytoplasmic side of the membrane; that stretch reads MDTSRVYGNVKTFRSPGHKQASFPSLSTDACRCPHWHHLALKLGC. The LCK-binding motif motif lies at 31–34; the sequence is CRCP. A helical; Signal-anchor for type II membrane protein transmembrane segment spans residues 46–66; the sequence is ATLILLLLTLIGLSVFVRFLV. Residues 67–217 lie on the Extracellular side of the membrane; the sequence is QKPLIEKCSM…WICQKTLKHV (151 aa). The region spanning 101–211 is the C-type lectin domain; sequence HRNKCLIISQ…CSSDNHWICQ (111 aa). 2 cysteine pairs are disulfide-bonded: Cys122–Cys210 and Cys189–Cys202.

Expressed in natural killer cells and a subset of T-cells.

The protein resides in the membrane. Its function is as follows. Binds CLEC2I/Clr-g leading to activation of natural killer cells or stimulation of IL-2 production and proliferation of T-cells in response to antigen stimulation. May contribute to the formation of the immunological synapse between T-cells and antigen-presenting dendritic cells. The chain is Killer cell lectin-like receptor subfamily B member 1F from Rattus norvegicus (Rat).